A 380-amino-acid chain; its full sequence is F-box protein At4g18380 (380 aa).

Residues 22–70 form the F-box domain; it reads IDHFDNLPDSILLLIFNNIGDVKALGRCSVVSKRFHSLIPQVENVFVRV.

The polypeptide is F-box protein At4g18380 (Arabidopsis thaliana (Mouse-ear cress)).